The following is a 328-amino-acid chain: MLVSLLGILLSVIVGFVVTLISTKWVIGLCKKRGFTGKDINKLTKDDVPVLGGIGIVAGFVAGSFTFLLTSYNLSPGIENVVVSILLSSLIIGFLGLLDDIFNISQATRAFLPIFASIPLILYSVGHTIISIPFLGKVNFGILFYIIILPATLTITANAFNMLEGLNGLGAGMGLIMALALAYIGLKSGGTSFYAGIVSIILASVLFGFLIFNFYPAKTFPGNIGTYFIGSVIGSIGISGYMYTALFFLYLPYVIEFVLKAKTRFKGVSFGKIDDQGYLHWDSKPNSLTHIVMRIGKFKEYHIVLIIWGIEILFAILAVVFQTVTITI.

9 consecutive transmembrane segments (helical) span residues 1-21 (MLVSLLGILLSVIVGFVVTLI), 48-68 (VPVLGGIGIVAGFVAGSFTFL), 78-98 (IENVVVSILLSSLIIGFLGLL), 107-127 (ATRAFLPIFASIPLILYSVGH), 129-149 (IISIPFLGKVNFGILFYIIIL), 166-186 (LNGLGAGMGLIMALALAYIGL), 192-212 (SFYAGIVSIILASVLFGFLIF), 228-248 (FIGSVIGSIGISGYMYTALFF), and 301-321 (YHIVLIIWGIEILFAILAVVF).

It belongs to the glycosyltransferase 4 family.

The protein localises to the cell membrane. The catalysed reaction is a di-trans,poly-cis-dolichyl phosphate + UDP-N-acetyl-alpha-D-glucosamine = an N-acetyl-alpha-D-glucosaminyl-diphospho-di-trans,poly-cis-dolichol + UMP. With respect to regulation, inhibited by tunicamycin. This Sulfolobus acidocaldarius (strain ATCC 33909 / DSM 639 / JCM 8929 / NBRC 15157 / NCIMB 11770) protein is Putative UDP-N-acetylglucosamine--dolichyl-phosphate N-acetylglucosaminephosphotransferase (gnpTA).